We begin with the raw amino-acid sequence, 251 residues long: uncharacterized protein (251 aa).

A signal peptide spans 1–15 (MSAISSLVLIGWAMC). N225 and N242 each carry an N-linked (GlcNAc...) asparagine glycan.

This is an uncharacterized protein from Encephalitozoon cuniculi (strain GB-M1) (Microsporidian parasite).